We begin with the raw amino-acid sequence, 701 residues long: MAEEEPKIGVYICHCGENIAGAVNIEEVKKFAETLPNVVVVRDYLFMCSDPGQELIKQDIKEGRVNRVVVAACTPRTHEPIFRKACEDAGLNKYYFEMANIRDQCSWAHWHEKEKATEKAKQIIAAAVAKARLLEPLEDRYVDITQKVLVIGGGIAGIFAALDIANAGYKVYLVERNPSIGGNMAKLDKTFPTNDCSACILTPLMVEVANHPNIELLTYSEVEAVEGTVGNFKVKVRKKQTWVDWDLCTGCGACTDVCPPKARVPDEFNEGLSKRGAIYIQFPQAVPKKAVIDIDACIECGGRKFGTEPRKTKDGKPILAPCEKVCPTGAADRTKPRNPEGELIELDVGAIIVATGYKVMDKTHFKEFAPDSPNVITALQMERLISATGPTEGKLIVPSDIPKYEEWKKKVAKGEEVELEARKPHRIVYVSCVGSRDERFHTYCSKVCCMYMLKQAMLLKEKYPDLDIYIFFIDVRTPGKDFDEYYMRCRQLGIKVIKGKVGGIRRMPDERLWVRGYDAEIGKPVEVIADLVVLATAIEPSDGTIELARKLGINIGAEGFFRERHTKLYPVDTMTEGIFICGCAQGPKDIPDSVAQAKAAASSAMSLIAPGKMKLEPLVSEVDKEKCSGCGICVPLCPYGAITMTKYNESMRAEINPALCKGCGVCAAACPSKAIKLHGFTFEQVLAQVRTLAKRGIVEVL.

152–175 (GGGIAGIFAALDIANAGYKVYLVE) contributes to the FAD binding site. A 4Fe-4S ferredoxin-type 1 domain is found at 239 to 268 (KQTWVDWDLCTGCGACTDVCPPKARVPDEF). [4Fe-4S] cluster contacts are provided by Cys248, Cys251, Cys254, Cys326, Cys627, Cys630, Cys633, Cys637, Cys660, Cys663, Cys666, and Cys670. 4Fe-4S ferredoxin-type domains are found at residues 618–647 (LVSE…MTKY) and 651–680 (MRAE…LHGF).

The protein belongs to the HdrA family. In terms of assembly, the heterodisulfide reductase is composed of three subunits; HdlA, HdlB and HdlC. It forms a complex with the F420-non-reducing hydrogenase (Mvh), which provides the reducing equivalents to the heterodisulfide reductase. The cofactor is [4Fe-4S] cluster. FAD serves as cofactor.

It localises to the cytoplasm. Has oxidoreductase activity. The Hdl and Mvh subunits may together mediate electron transfer from hydrogen to an unidentified electron acceptor on the cytoplasmic side of the membrane. In Archaeoglobus profundus (strain DSM 5631 / JCM 9629 / NBRC 100127 / Av18), this protein is Heterodisulfide reductase subunit A-like protein (hdlA).